We begin with the raw amino-acid sequence, 742 residues long: Polyribonucleotide nucleotidyltransferase (742 aa).

Mg(2+)-binding residues include Asp-515 and Asp-521. A KH domain is found at 581 to 640 (PRIITITIPVDKIGEVIGPKGKIINQIQDDTGASISIEDDGTIYIGATNGEAAEAAKNAV). Residues 652–724 (GERYLGTVVK…DRGKLSLVPV (73 aa)) form the S1 motif domain.

The protein belongs to the polyribonucleotide nucleotidyltransferase family. Mg(2+) is required as a cofactor.

Its subcellular location is the cytoplasm. The enzyme catalyses RNA(n+1) + phosphate = RNA(n) + a ribonucleoside 5'-diphosphate. Functionally, involved in mRNA degradation. Catalyzes the phosphorolysis of single-stranded polyribonucleotides processively in the 3'- to 5'-direction. This chain is Polyribonucleotide nucleotidyltransferase, found in Nocardioides sp. (strain ATCC BAA-499 / JS614).